We begin with the raw amino-acid sequence, 425 residues long: MQIYMVGGAVRDRLLGRPVNDHDWVVVGATPDDMVARGYLPVGRDFPVFLHPETREEYALARTERKSGRGYRGFVVQTSPDVTLEEDLSRRDLTINAIAASAAWTGAEDLFDPYGGARDLQARVLRHVTDSFREDPVRILRVARFAARFTDFTVAPETMQLMREMVHDGEADHLVPERVWQELARGLMEPQPSRMFDVLRDCGALAVVLPEVERLWGVPQRPEYHPEVDTGVHLMMVLDMAAHLQAPLTVRFACLTHDLGKGTTPHDVLPRHIGHEQRSARLLKAVCERLRVPVECRELADVVAREHGNIHRSGDLGAAALVRLLERCDAIRKPARLDEILLACECDARGRLGFADRPYPQRARINAALAAVQSVTTSSVAAHAAQLGLSGPKVGEMIHAARVQAVADWLHATAQPAPEPQGNAG.

The ATP site is built by glycine 8 and arginine 11. Glycine 8 and arginine 11 together coordinate CTP. Mg(2+)-binding residues include aspartate 21 and aspartate 23. Positions 91, 141, and 144 each coordinate ATP. Residues arginine 91, arginine 141, and arginine 144 each contribute to the CTP site. The 102-residue stretch at 230–331 (TGVHLMMVLD…VRLLERCDAI (102 aa)) folds into the HD domain.

Belongs to the tRNA nucleotidyltransferase/poly(A) polymerase family. Bacterial CCA-adding enzyme type 1 subfamily. Monomer. Can also form homodimers and oligomers. Requires Mg(2+) as cofactor. Ni(2+) serves as cofactor.

The catalysed reaction is a tRNA precursor + 2 CTP + ATP = a tRNA with a 3' CCA end + 3 diphosphate. The enzyme catalyses a tRNA with a 3' CCA end + 2 CTP + ATP = a tRNA with a 3' CCACCA end + 3 diphosphate. Functionally, catalyzes the addition and repair of the essential 3'-terminal CCA sequence in tRNAs without using a nucleic acid template. Adds these three nucleotides in the order of C, C, and A to the tRNA nucleotide-73, using CTP and ATP as substrates and producing inorganic pyrophosphate. tRNA 3'-terminal CCA addition is required both for tRNA processing and repair. Also involved in tRNA surveillance by mediating tandem CCA addition to generate a CCACCA at the 3' terminus of unstable tRNAs. While stable tRNAs receive only 3'-terminal CCA, unstable tRNAs are marked with CCACCA and rapidly degraded. The chain is Multifunctional CCA protein from Acidovorax sp. (strain JS42).